We begin with the raw amino-acid sequence, 351 residues long: Uroporphyrinogen decarboxylase (351 aa).

Residues 26–30, aspartate 76, tyrosine 153, serine 208, and histidine 323 each bind substrate; that span reads RQAGR.

It belongs to the uroporphyrinogen decarboxylase family. Homodimer.

It is found in the cytoplasm. It carries out the reaction uroporphyrinogen III + 4 H(+) = coproporphyrinogen III + 4 CO2. Its pathway is porphyrin-containing compound metabolism; protoporphyrin-IX biosynthesis; coproporphyrinogen-III from 5-aminolevulinate: step 4/4. Functionally, catalyzes the decarboxylation of four acetate groups of uroporphyrinogen-III to yield coproporphyrinogen-III. This is Uroporphyrinogen decarboxylase from Prochlorococcus marinus (strain MIT 9211).